Consider the following 155-residue polypeptide: Snaclec agkicetin-C subunit alpha (155 aa).

Residues 1 to 23 (MGRFIFVSFGLLVVFLSLSGTAA) form the signal peptide. Cystine bridges form between Cys-25/Cys-36, Cys-53/Cys-149, and Cys-124/Cys-141. The region spanning 32-150 (YIRFCYQPFK…CGLKHVFMCK (119 aa)) is the C-type lectin domain.

The protein belongs to the snaclec family. In terms of assembly, heterodimer of subunits alpha and beta; disulfide-linked. Expressed by the venom gland.

The protein localises to the secreted. In terms of biological role, is a potent glycoprotein Ibalpha (GP1BA) antagonist. Concentration-dependently inhibits botrocetin-, ristocetin- and low dose thrombin-induced platelet aggregation. Inhibits platelet adhesion only through inhibiting the vWF interaction with GP1BA, but has minimal effect on other platelet receptors, such as alpha-IIb/beta-3 (ITGA2B/ITGB3) or alpha-2/beta-1 (ITGA2/ITGB1). Causes an instant severe thrombocytopenia in rats and is not lethal to mice. This Deinagkistrodon acutus (Hundred-pace snake) protein is Snaclec agkicetin-C subunit alpha.